The primary structure comprises 474 residues: Immunoglobulin heavy constant mu (474 aa).

A CH1 region spans residues 1–105 (GSASAPTLFP…NKEKNVPLPV (105 aa)). Residues 1 to 450 (GSASAPTLFP…EEGFENLWAT (450 aa)) are Extracellular-facing. 4 consecutive Ig-like domains span residues 6 to 102 (PTLF…KNVP), 111 to 211 (PKVS…QNAS), 229 to 319 (PSFA…QTIS), and 329 to 430 (PDVY…RTVD). Intrachain disulfides connect cysteine 28/cysteine 88 and cysteine 134/cysteine 197. Asparagine 46 carries an N-linked (GlcNAc...) (complex) asparagine glycan. A CH2 region spans residues 106–217 (IAELPPKVSV…QNASSMCVPD (112 aa)). The N-linked (GlcNAc...) (complex) asparagine glycan is linked to asparagine 209. Positions 218–323 (QDTAIRVFAI…LKQTISRPKG (106 aa)) are CH3. 2 cysteine pairs are disulfide-bonded: cysteine 244–cysteine 303 and cysteine 351–cysteine 413. N-linked (GlcNAc...) asparagine glycosylation is found at asparagine 272 and asparagine 279. The CH4 stretch occupies residues 324 to 452 (VALHRPDVYL…GFENLWATAS (129 aa)). Residues 437–453 (VSADEEGFENLWATAST) form an important for IgM oligomerization region. N-linked (GlcNAc...) asparagine glycosylation is present at aspartate 440. Residues 451-471 (ASTFIVLFLLSLFYSTTVTLF) form a helical membrane-spanning segment. Residues 472–474 (KVK) lie on the Cytoplasmic side of the membrane.

As to quaternary structure, the basic structural unit of both sIgM and mIgM molecules consists of two identical heavy chains and two identical light chains; disulfide-linked. N-terminal variable regions of the heavy and light chains form the antigen binding sites, whereas the C-terminal constant regions of the heavy chains interact with immune receptors to mediate effector functions. In terms of assembly, part of IgM antibody. Forms high order oligomers, homopentamers stabilized by the JCHAIN and homohexamers that lack JCHAIN. The oligomerization amplifies an inherently low affinity of IgM antibodies for the antigen by multi-point attachment (avidity). Adjacent IgM protomers associate via interchain disulfide links to form an asymmetric pentameric structure with a 50 degree gap. A single copy of JCHAIN is covalently linked to the first and the fifth IgM monomers via interchain disulfide bonds thus closing the pentamer ring. Only JCHAIN-containing IgM binds PIGR secretory component (via D1-CDR1 region); this interaction is a prerequisite for IgM transcytosis across mucosal epithelium. Pentameric sIgM interacts (via CH4 domain) with FCRM (via Ig-like domain); the interaction is glycan-independent and multivalent theoretically involving up to eight binding sites for the IgM pentamer. Interacts with FCAMR; this interaction facilitates the endocytosis of IgM-coated microbes or IgM-antigen immune complexes. Antigen-bound IgM (via the Fc region) binds to globular domains of C1q component of the complement system, all three modules C1QA, C1QB and C1QC being involved in IgM binding; this interaction is multivalent. Pentameric sIgM (via Fc region) interacts with CD5L (via SRCR2) through interchain disulfide-linkages; this interaction protects CD5L from renal excretion and provides for high levels of CD5L in circulation. Part of IgM B cell receptor complex on pre-B cells, immature and mature B cells. The BCR complex consists of one membrane-bound IgM molecule responsible for antigen binding, non-covalently associated with CD79A and CD79B signaling chains. Post-translationally, N-glycosylated; important for IgM secretion and its localization at the plasma membrane. The interaction with FCMR is glycan-independent.

The protein localises to the secreted. Its subcellular location is the cell membrane. Constant region of immunoglobulin heavy chains. Immunoglobulins, also known as antibodies, are membrane-bound or secreted glycoproteins produced by B lymphocytes. In the recognition phase of humoral immunity, the membrane-bound immunoglobulins serve as receptors which, upon binding of a specific antigen, trigger the clonal expansion and differentiation of B lymphocytes into immunoglobulins-secreting plasma cells. Secreted immunoglobulins mediate the effector phase of humoral immunity, which results in the elimination of bound antigens. The antigen binding site is formed by the variable domain of one heavy chain, together with that of its associated light chain. Thus, each immunoglobulin has two antigen binding sites with remarkable affinity for a particular antigen. The variable domains are assembled by a process called V-(D)-J rearrangement and can then be subjected to somatic hypermutations which, after exposure to antigen and selection, allow affinity maturation for a particular antigen. In terms of biological role, constant region of secreted IgM (sIgM), also known as the Fc region of IgM antibody. Able to multimerize, forms high order polymers, mainly pentamers and occasionally hexamers, providing for multivalency and high avidity recognition of antigens. Natural sIgM are polyreactive and recognize conserved self- and pathogen-derived structures, whereas immune sIgM are secreted only upon exposure to pathogens and are antigen-specific. Both natural and immune sIgM are required for an efficient humoral immune response to infection. Mediates sIgM effector functions mostly via Fc receptors and the complement system. On lymphoid cells binds high-affinity Fc receptor FCMR and promotes induction of an efficient neutralizing IgG response while maintaining tolerance to self-antigens. Recruits C1q complement component to initiate the classical complement pathway, facilitating the recognition and neutralization of pathogens by the host. Together with C1q and mannose-binding lectin promotes the phagocytosis of apoptotic cells by macrophages, ensuring the clearance of potential autoimmune epitopes from tissues. Involved in mucosal immunity. It is transported by transcytosis across mucosal epithelium by PIGR and secreted on the apical side in complex with PIGR secretory component to scan mucosal lining for pathogens. IgM-antigen complexes undergo FCMR-mediated retrotranscytosis across mucosal M cells toward antigen-presenting cells in mucosal lymphoid tissues. Its function is as follows. Constant region of membrane-bound IgM, part of the B cell receptor complex (BCR). IgM BCR provides constitutive tonic signaling for B cell survival. Mediates pre-BCR signaling that regulates B cell selection and rearrangement of Ig genes via allelic exclusion. The sequence is that of Immunoglobulin heavy constant mu from Homo sapiens (Human).